The chain runs to 190 residues: Movement protein TGB3 (190 aa).

Topologically, residues M1 to S52 are cytoplasmic. The helical transmembrane segment at L53–Y73 threads the bilayer. Over L74–K166 the chain is Lumenal. Phosphotyrosine occurs at positions 89 and 120. Residues Y89 to N93 carry the Involved in plasmodesmata targeting and virus cell-to-cell movement motif. A helical transmembrane segment spans residues L167–L187. Over A188–C190 the chain is Cytoplasmic.

It belongs to the virgaviridae TGB3 movement protein family. Interacts with movement protein TGB2. TGB1-TGB3-TGB2 complex formation is enhanced by ATP hydrolysis.

The protein localises to the host cell junction. It is found in the host plasmodesma. Its subcellular location is the host endoplasmic reticulum membrane. It localises to the host cytoplasm. The protein resides in the host cytoskeleton. Functionally, participates in the transport of viral genome to neighboring plant cells directly through plasmodesmata, without any budding. TGBp2 and TGBp3 are necessary for intracellular delivery of TGBp1-containing vRNPs to plasmodesmata. Can gate plasmodesmata and increase their size exclusion limit. Induces host actin cytoskeleton network thickening, which probably plays a major role in virus cell-to-cell movement. The sequence is that of Movement protein TGB3 from Solanum nigrum (Black nightshade).